The primary structure comprises 183 residues: Adenylate kinase (183 aa).

12 to 17 (GAGKGT) lines the ATP pocket. Residues 32-61 (STGDLLRSEVSAGSALGQEAEAVMNRGELV) are NMP. Residues Thr33, Arg38, 59–61 (ELV), 86–89 (GFPR), and Gln93 contribute to the AMP site. An LID region spans residues 127–133 (ARGRADD). Arg128 provides a ligand contact to ATP. Residues Arg130 and Arg141 each contribute to the AMP site. Gly169 contributes to the ATP binding site.

The protein belongs to the adenylate kinase family. Monomer.

The protein localises to the cytoplasm. The enzyme catalyses AMP + ATP = 2 ADP. The protein operates within purine metabolism; AMP biosynthesis via salvage pathway; AMP from ADP: step 1/1. Functionally, catalyzes the reversible transfer of the terminal phosphate group between ATP and AMP. Plays an important role in cellular energy homeostasis and in adenine nucleotide metabolism. This is Adenylate kinase from Synechococcus sp. (strain WH7803).